A 704-amino-acid polypeptide reads, in one-letter code: Elongation factor G (704 aa).

The region spanning 6–282 (NKVRNIGIMA…AVIDYLPTPL (277 aa)) is the tr-type G domain. GTP-binding positions include 15–22 (AHIDAGKT), 79–83 (DTPGH), and 133–136 (NKMD).

This sequence belongs to the TRAFAC class translation factor GTPase superfamily. Classic translation factor GTPase family. EF-G/EF-2 subfamily.

The protein localises to the cytoplasm. In terms of biological role, catalyzes the GTP-dependent ribosomal translocation step during translation elongation. During this step, the ribosome changes from the pre-translocational (PRE) to the post-translocational (POST) state as the newly formed A-site-bound peptidyl-tRNA and P-site-bound deacylated tRNA move to the P and E sites, respectively. Catalyzes the coordinated movement of the two tRNA molecules, the mRNA and conformational changes in the ribosome. The polypeptide is Elongation factor G (Corynebacterium diphtheriae (strain ATCC 700971 / NCTC 13129 / Biotype gravis)).